The sequence spans 485 residues: tRNA sulfurtransferase (485 aa).

The 105-residue stretch at 63–167 folds into the THUMP domain; sequence ERYAERLACI…NEHLYLVEKR (105 aa). Residues 185–186, Lys267, Gly289, and Gln298 contribute to the ATP site; that span reads LI. A disulfide bridge connects residues Cys346 and Cys458. The Rhodanese domain occupies 406-484; sequence VSGGEVVVDI…GYHNVKVYRP (79 aa). Catalysis depends on Cys458, which acts as the Cysteine persulfide intermediate.

Belongs to the ThiI family.

The protein resides in the cytoplasm. It carries out the reaction [ThiI sulfur-carrier protein]-S-sulfanyl-L-cysteine + a uridine in tRNA + 2 reduced [2Fe-2S]-[ferredoxin] + ATP + H(+) = [ThiI sulfur-carrier protein]-L-cysteine + a 4-thiouridine in tRNA + 2 oxidized [2Fe-2S]-[ferredoxin] + AMP + diphosphate. The enzyme catalyses [ThiS sulfur-carrier protein]-C-terminal Gly-Gly-AMP + S-sulfanyl-L-cysteinyl-[cysteine desulfurase] + AH2 = [ThiS sulfur-carrier protein]-C-terminal-Gly-aminoethanethioate + L-cysteinyl-[cysteine desulfurase] + A + AMP + 2 H(+). The protein operates within cofactor biosynthesis; thiamine diphosphate biosynthesis. Catalyzes the ATP-dependent transfer of a sulfur to tRNA to produce 4-thiouridine in position 8 of tRNAs, which functions as a near-UV photosensor. Also catalyzes the transfer of sulfur to the sulfur carrier protein ThiS, forming ThiS-thiocarboxylate. This is a step in the synthesis of thiazole, in the thiamine biosynthesis pathway. The sulfur is donated as persulfide by IscS. In Shewanella loihica (strain ATCC BAA-1088 / PV-4), this protein is tRNA sulfurtransferase.